A 196-amino-acid chain; its full sequence is UPF0056 membrane protein BUsg_434 (196 aa).

Transmembrane regions (helical) follow at residues 8-28 (TILL…MTIL), 45-65 (IIAL…LTIL), 71-91 (TVSI…IFPS), 105-125 (FLVP…TLML), 134-154 (MPYL…ILLL), and 174-194 (MGLI…KAWF).

The protein belongs to the UPF0056 (MarC) family.

The protein localises to the cell membrane. This Buchnera aphidicola subsp. Schizaphis graminum (strain Sg) protein is UPF0056 membrane protein BUsg_434.